The chain runs to 532 residues: Membrane protein insertase YidC (532 aa).

5 helical membrane passes run 7 to 27 (FFIF…QSQM), 336 to 356 (LTIL…ITFI), 413 to 433 (GGFL…YMLI), 450 to 470 (LSSQ…MFFI), and 492 to 512 (PVIF…YYII).

The protein belongs to the OXA1/ALB3/YidC family. Type 1 subfamily. Interacts with the Sec translocase complex via SecD. Specifically interacts with transmembrane segments of nascent integral membrane proteins during membrane integration.

Its subcellular location is the cell membrane. Its function is as follows. Required for the insertion and/or proper folding and/or complex formation of integral membrane proteins into the membrane. Involved in integration of membrane proteins that insert both dependently and independently of the Sec translocase complex, as well as at least some lipoproteins. Aids folding of multispanning membrane proteins. The sequence is that of Membrane protein insertase YidC from Buchnera aphidicola subsp. Acyrthosiphon pisum (strain 5A).